A 264-amino-acid chain; its full sequence is ATP synthase subunit a (264 aa).

6 consecutive transmembrane segments (helical) span residues Thr-29–Phe-49, Ile-90–Ile-110, Asp-134–Ile-154, Ile-177–Leu-197, Leu-208–Val-228, and Leu-235–Val-255.

It belongs to the ATPase A chain family. As to quaternary structure, F-type ATPases have 2 components, CF(1) - the catalytic core - and CF(0) - the membrane proton channel. CF(1) has five subunits: alpha(3), beta(3), gamma(1), delta(1), epsilon(1). CF(0) has three main subunits: a(1), b(2) and c(9-12). The alpha and beta chains form an alternating ring which encloses part of the gamma chain. CF(1) is attached to CF(0) by a central stalk formed by the gamma and epsilon chains, while a peripheral stalk is formed by the delta and b chains.

It is found in the cell inner membrane. Functionally, key component of the proton channel; it plays a direct role in the translocation of protons across the membrane. The polypeptide is ATP synthase subunit a (Shewanella oneidensis (strain ATCC 700550 / JCM 31522 / CIP 106686 / LMG 19005 / NCIMB 14063 / MR-1)).